Reading from the N-terminus, the 267-residue chain is MKVEAKKKFGQNFISDQNLINKIVSILGNDKDQLIIEIGPGTGALTKLLAQKYNKVVAIEIDTDMEPILKKEITNDNFELFLSDVLLVDFEKLIKEKRQHENQKVSIISNMPYYITSEILFRTLNVSDKLTKAVFMMQKEVAIRVCSYKGENNYNNLSVACEFYADKKYEFTVPKHMFYPVPKVDSAIISLTFNNKYTEQIKDKDKFLTFLRKIFNNRRKTILNNLSNVTNDKTKANEILDNLNIDKSLRPEVVGLEDFIRIYNKTR.

Positions 12, 14, 39, 60, 84, and 110 each coordinate S-adenosyl-L-methionine.

It belongs to the class I-like SAM-binding methyltransferase superfamily. rRNA adenine N(6)-methyltransferase family. RsmA subfamily.

It localises to the cytoplasm. It catalyses the reaction adenosine(1518)/adenosine(1519) in 16S rRNA + 4 S-adenosyl-L-methionine = N(6)-dimethyladenosine(1518)/N(6)-dimethyladenosine(1519) in 16S rRNA + 4 S-adenosyl-L-homocysteine + 4 H(+). Functionally, specifically dimethylates two adjacent adenosines (A1518 and A1519) in the loop of a conserved hairpin near the 3'-end of 16S rRNA in the 30S particle. May play a critical role in biogenesis of 30S subunits. The sequence is that of Ribosomal RNA small subunit methyltransferase A from Mesoplasma florum (strain ATCC 33453 / NBRC 100688 / NCTC 11704 / L1) (Acholeplasma florum).